The sequence spans 62 residues: UPF0434 protein azo1471 (62 aa).

The protein belongs to the UPF0434 family.

The protein is UPF0434 protein azo1471 of Azoarcus sp. (strain BH72).